The following is a 921-amino-acid chain: Collagen alpha-1(IX) chain (921 aa).

An N-terminal signal peptide occupies residues 1-23 (MKNFWKISVFFCVCSCLGPWVSA). Residues 24-268 (TLKRRARFPA…ITTSQTTDER (245 aa)) are nonhelical region (NC4). Disulfide bonds link Cys-44–Cys-242 and Cys-198–Cys-252. The Laminin G-like domain maps to 50-244 (GQDDLPGFDL…LQWMLIHCDP (195 aa)). Zn(2+) is bound by residues Asp-213, Asp-215, and His-253. 2 disordered regions span residues 253–759 (HELP…APTD) and 783–921 (RPDT…GPDK). 8 Collagen-like domains span residues 269-325 (GPPG…PGAD), 326-356 (GLTG…GFPG), 358-403 (GIPG…GTIG), 416-472 (PPGR…GLRG), 473-512 (ITGI…PPGE), 604-656 (GKPG…LPGP), 657-711 (PGLP…PGEP), and 712-755 (GLRG…PPGR). Residues 269-405 (GPPGEQGPPG…PGPSGTIGFH (137 aa)) form a triple-helical region (COL3) region. Pro residues-rich tracts occupy residues 273–285 (EQGP…PPGV) and 298–310 (KGPP…PGDP). The segment covering 368–383 (TTGLPGELGRVGPIGD) has biased composition (low complexity). Pro residues predominate over residues 387–398 (RGPPGPPGPPGP). The interval 406–417 (DGDPLCPNSCPP) is nonhelical region (NC3). A triple-helical region (COL2) region spans residues 418 to 756 (GRSGYPGLPG…PGIQGPPGRA (339 aa)). Residues 479 to 489 (DKGEKGARGFD) are compositionally biased toward basic and acidic residues. Composition is skewed to low complexity over residues 594–632 (PGKP…PVGP) and 639–650 (PGKLGSVGSPGL). The interval 757–786 (PTDQHIKQVCMRVVQEHFVEMAASLKRPDT) is nonhelical region (NC2). The triple-helical region (COL1) stretch occupies residues 787–901 (GASGLPGRPG…PGPPGPPGFC (115 aa)). The region spanning 790 to 847 (GLPGRPGPPGPPGPPGENGFPGQMGIRGLPGIKGPPGALGLRGPKGDLGEKGERGPPG) is the Collagen-like 9 domain. The segment covering 794 to 804 (RPGPPGPPGPP) has biased composition (pro residues). Residues 833–845 (PKGDLGEKGERGP) show a composition bias toward basic and acidic residues. The segment covering 888-900 (VPGPPGPPGPPGF) has biased composition (pro residues). Positions 902-921 (EPASCTLQSGQRAFSKGPDK) are nonhelical region (NC1).

Belongs to the fibril-associated collagens with interrupted helices (FACIT) family. Heterotrimer of an alpha 1(IX), an alpha 2(IX) and an alpha 3(IX) chain. Post-translationally, covalently linked to the telopeptides of type II collagen by lysine-derived cross-links. Prolines at the third position of the tripeptide repeating unit (G-X-Y) are hydroxylated in some or all of the chains.

It localises to the secreted. It is found in the extracellular space. Its subcellular location is the extracellular matrix. Its function is as follows. Structural component of hyaline cartilage and vitreous of the eye. In Mus musculus (Mouse), this protein is Collagen alpha-1(IX) chain (Col9a1).